The primary structure comprises 517 residues: Cytochrome P450 monooxygenase 124 (517 aa).

The chain crosses the membrane as a helical span at residues 3–23 (SLLVLFVSLLALGALKKHLDF). A heme-binding site is contributed by cysteine 453.

The protein belongs to the cytochrome P450 family. Heme is required as a cofactor.

The protein resides in the membrane. It participates in secondary metabolite biosynthesis. Its function is as follows. Cytochrome P450 monooxygenase that is able to use trans-stilbene as a substrate for oxidation. This chain is Cytochrome P450 monooxygenase 124, found in Postia placenta (strain ATCC 44394 / Madison 698-R) (Brown rot fungus).